We begin with the raw amino-acid sequence, 483 residues long: MPLVIFNSLGREKQLFEPLHPGVVGIYVCGPTVYGHAHLGHAKSYVSFDVVVRWLRESGYRVKYVQNITDVGHLSDDADEGEDKIARQARLEKTDPMEIAQFYTRSFLDDMDRLGVLRPNISPLATGHIPEQIALVDKLVKRGHAYEVNGNVYFSVESFPGYGKLSGRTDLDAVQSGARVGVRSEKHNPSDFALWKKAEEGHLMQWDSPWGMGYPGWHLECSAMSMKYLGDTIDIHGGGMENRFPHHECEIAQSEAANEKPYVRYWMHNNMVTVNGTKMGKSLKNAVNLKEIFKTVDPLAVRFFILQSHYRSPLDYSDTAVAGSTAGLQKLRETRQRLIEATPGTGLLDAAPFSLRFREAMDDDFNTPVAIAALFDFSKALNTALDRPDGLNASSLEAARELFSTAAVTVLGIMTEDAEGGMHDGGRSAETLDEVMGVLMELRSEARKNKDFATSDLIRDHLLAAGIEIKDTREGASWSKTRH.

Cys-29 contributes to the Zn(2+) binding site. The 'HIGH' region signature appears at 31 to 41; the sequence is PTVYGHAHLGH. Zn(2+) contacts are provided by Cys-221, His-246, and Glu-250. The 'KMSKS' region motif lies at 278-282; it reads KMGKS. Lys-281 lines the ATP pocket.

Belongs to the class-I aminoacyl-tRNA synthetase family. Monomer. Zn(2+) is required as a cofactor.

The protein localises to the cytoplasm. The catalysed reaction is tRNA(Cys) + L-cysteine + ATP = L-cysteinyl-tRNA(Cys) + AMP + diphosphate. This Chlorobium luteolum (strain DSM 273 / BCRC 81028 / 2530) (Pelodictyon luteolum) protein is Cysteine--tRNA ligase.